A 122-amino-acid chain; its full sequence is Large ribosomal subunit protein uL14 (122 aa).

Belongs to the universal ribosomal protein uL14 family. In terms of assembly, part of the 50S ribosomal subunit. Forms a cluster with proteins L3 and L19. In the 70S ribosome, L14 and L19 interact and together make contacts with the 16S rRNA in bridges B5 and B8.

Its function is as follows. Binds to 23S rRNA. Forms part of two intersubunit bridges in the 70S ribosome. This is Large ribosomal subunit protein uL14 from Rhodospirillum centenum (strain ATCC 51521 / SW).